Reading from the N-terminus, the 373-residue chain is tRNA N6-adenosine threonylcarbamoyltransferase (373 aa).

Histidine 133, histidine 137, and tyrosine 154 together coordinate a divalent metal cation. Substrate-binding positions include 154 to 158 (YVSGG), aspartate 186, glycine 201, glutamate 205, and asparagine 302. Aspartate 331 serves as a coordination point for a divalent metal cation.

Belongs to the KAE1 / TsaD family. As to quaternary structure, component of the EKC/KEOPS complex composed of at least BUD32, CGI121, GON7, KAE1 and PCC1; the whole complex dimerizes. The cofactor is a divalent metal cation.

The protein resides in the cytoplasm. It localises to the nucleus. It catalyses the reaction L-threonylcarbamoyladenylate + adenosine(37) in tRNA = N(6)-L-threonylcarbamoyladenosine(37) in tRNA + AMP + H(+). In terms of biological role, component of the EKC/KEOPS complex that is required for the formation of a threonylcarbamoyl group on adenosine at position 37 (t(6)A37) in tRNAs that read codons beginning with adenine. The complex is probably involved in the transfer of the threonylcarbamoyl moiety of threonylcarbamoyl-AMP (TC-AMP) to the N6 group of A37. KAE1 likely plays a direct catalytic role in this reaction, but requires other protein(s) of the complex to fulfill this activity. The EKC/KEOPS complex also promotes both telomere uncapping and telomere elongation. The complex is required for efficient recruitment of transcriptional coactivators. The chain is tRNA N6-adenosine threonylcarbamoyltransferase from Debaryomyces hansenii (strain ATCC 36239 / CBS 767 / BCRC 21394 / JCM 1990 / NBRC 0083 / IGC 2968) (Yeast).